We begin with the raw amino-acid sequence, 560 residues long: MSRKLFASILIGALLGIGAPPSAHAGADDVVDSSKSFVMENFSSYHGTKPGYVDSIQKGIQKPKSGTQGNYDDDWKGFYSTDNKYDAAGYSVDNENPLSGKAGGVVKVTYPGLTKVLALKVDNAETIKKELGLSLTEPLMEQVGTEEFIKRFGDGASRVVLSLPFAEGSSSVEYINNWEQAKALSVELEINFETRGKRGQDAMYEYMAQACAGNRVRRSVGSSLSCINLDWDVIRDKTKTKIESLKEHGPIKNKMSESPNKTVSEEKAKQYLEEFHQTALEHPELSELKTVTGTNPVFAGANYAAWAVNVAQVIDSETADNLEKTTAALSILPGIGSVMGIADGAVHHNTEEIVAQSIALSSLMVAQAIPLVGELVDIGFAAYNFVESIINLFQVVHNSYNRPAYSPGHKTQPFLHDGYAVSWNTVEDSIIRTGFQGESGHDIKITAENTPLPIAGVLLPTIPGKLDVNKSKTHISVNGRKIRMRCRAIDGDVTFCRPKSPVYVGNGVHANLHVAFHRSSSEKIHSNEISSDSIGVLGYQKTVDHTKVNSKLSLFFEIKS.

The signal sequence occupies residues 1-25 (MSRKLFASILIGALLGIGAPPSAHA). The NAD(+) site is built by His-46 and Tyr-90. Residue Glu-173 is part of the active site. 2 cysteine pairs are disulfide-bonded: Cys-211–Cys-226 and Cys-486–Cys-496.

Homodimer.

It carries out the reaction diphthamide-[translation elongation factor 2] + NAD(+) = N-(ADP-D-ribosyl)diphthamide-[translation elongation factor 2] + nicotinamide + H(+). Its function is as follows. Diphtheria toxin, produced by a phage infecting Corynebacterium diphtheriae, is a proenzyme that, after activation, catalyzes the covalent attachment of the ADP ribose moiety of NAD to elongation factor 2. Fragment A is responsible for enzymatic ADP-ribosylation of elongation factor 2, while fragment B is responsible for binding of toxin to cell receptors and entry of fragment A. The sequence is that of Diphtheria toxin from Corynephage omega.